Here is a 502-residue protein sequence, read N- to C-terminus: Histidine--tRNA ligase (502 aa).

Belongs to the class-II aminoacyl-tRNA synthetase family. As to quaternary structure, homodimer.

Its subcellular location is the cytoplasm. The enzyme catalyses tRNA(His) + L-histidine + ATP = L-histidyl-tRNA(His) + AMP + diphosphate + H(+). This is Histidine--tRNA ligase from Brucella abortus (strain S19).